Reading from the N-terminus, the 472-residue chain is 3-isopropylmalate dehydratase large subunit (472 aa).

Positions 61–80 are disordered; that stretch reads TPDHNVPTTQKERASGVEGI. Cysteine 353, cysteine 414, and cysteine 417 together coordinate [4Fe-4S] cluster.

Belongs to the aconitase/IPM isomerase family. LeuC type 1 subfamily. Heterodimer of LeuC and LeuD. [4Fe-4S] cluster serves as cofactor.

The catalysed reaction is (2R,3S)-3-isopropylmalate = (2S)-2-isopropylmalate. Its pathway is amino-acid biosynthesis; L-leucine biosynthesis; L-leucine from 3-methyl-2-oxobutanoate: step 2/4. Catalyzes the isomerization between 2-isopropylmalate and 3-isopropylmalate, via the formation of 2-isopropylmaleate. In Saccharophagus degradans (strain 2-40 / ATCC 43961 / DSM 17024), this protein is 3-isopropylmalate dehydratase large subunit.